The primary structure comprises 860 residues: Leucine--tRNA ligase (860 aa).

Residues 42-52 carry the 'HIGH' region motif; it reads PYPSGRLHMGH. The 'KMSKS' region motif lies at 619-623; that stretch reads KMSKS. Lys622 is an ATP binding site.

Belongs to the class-I aminoacyl-tRNA synthetase family.

It is found in the cytoplasm. The catalysed reaction is tRNA(Leu) + L-leucine + ATP = L-leucyl-tRNA(Leu) + AMP + diphosphate. This Escherichia coli O81 (strain ED1a) protein is Leucine--tRNA ligase.